We begin with the raw amino-acid sequence, 308 residues long: Acetyl-coenzyme A carboxylase carboxyl transferase subunit beta (308 aa).

In terms of domain architecture, CoA carboxyltransferase N-terminal spans 46-308; sequence LWVKCPDTGE…LMMGRGLKAA (263 aa).

Belongs to the AccD/PCCB family. Acetyl-CoA carboxylase is a heterohexamer composed of biotin carboxyl carrier protein (AccB), biotin carboxylase (AccC) and two subunits each of ACCase subunit alpha (AccA) and ACCase subunit beta (AccD).

It is found in the cytoplasm. The enzyme catalyses N(6)-carboxybiotinyl-L-lysyl-[protein] + acetyl-CoA = N(6)-biotinyl-L-lysyl-[protein] + malonyl-CoA. Its pathway is lipid metabolism; malonyl-CoA biosynthesis; malonyl-CoA from acetyl-CoA: step 1/1. Functionally, component of the acetyl coenzyme A carboxylase (ACC) complex. Biotin carboxylase (BC) catalyzes the carboxylation of biotin on its carrier protein (BCCP) and then the CO(2) group is transferred by the transcarboxylase to acetyl-CoA to form malonyl-CoA. In Caulobacter sp. (strain K31), this protein is Acetyl-coenzyme A carboxylase carboxyl transferase subunit beta.